Here is a 188-residue protein sequence, read N- to C-terminus: Zinc finger protein 428 (188 aa).

The tract at residues 1-162 (MTETREPAET…EEEEEEGTYH (162 aa)) is disordered. The span at 40–61 (PDSEEEEDEEEEEEETTDDPEY) shows a compositional bias: acidic residues. Positions 84–94 (RAAQPPAQPCQ) are enriched in low complexity. Thr108 is subject to Phosphothreonine. A compositionally biased stretch (low complexity) spans 116–129 (PATAPQEAPAPEGR). Residues 138–149 (PPRAGEGRPAGR) are compositionally biased toward basic and acidic residues. The C2H2-type zinc finger occupies 161–183 (YHCTECEDSFDNLGELHGHFMLH).

The polypeptide is Zinc finger protein 428 (ZNF428) (Homo sapiens (Human)).